Consider the following 765-residue polypeptide: MSSARDLIKVDIEWGMERLVRAQQVVELRPYDIESWSVMIREAQTRPIHEVRSLYESLVNVFPTTARYWKLYIEMEMRSRYYERVEKLFQRCLVKILNIDLWKLYLTYVKETKSGLSTHKEKMAQAYDFALEKIGMDLHSFSIWQDYIYFLRGVEAVGNYAENQKITAVRRVYQKAVVTPIVGIEQLWKDYIAFEQNINPIISEKMSLERSKDYMNARRVAKELEYHTKGLNRNLPAVPPTLTKEEVKQVELWKRFITYEKSNPLRTEDTALVTRRVMFATEQCLLVLTHHPAVWHQASQFLDTSARVLTEKGVRTSVENISPILCVPVVNQIEWVMAFAWWWAKDVQAAKIFADECANILERSINGVLNRNALLYFAYADFEEGRLKYEKVHTMYNKLLQLPDIDPTLVYVQYMKFARRAEGIKSARSIFKKAREDVRSRYHIFVAAALMEYYCSKDKEIAFRIFELGLKRFGGSPEYVMCYIDYLSHLNEDNNTRVLFERVLSSGGLSPHKSVEVWNRFLEFESNIGDLSSIVKVERRRSAVFENLKEYEGKETAQLVDRYKFLDLYPCTSTELKSIGYAENVGIILNKVGGGAQSQNTGEVETDSEATPPLPRPDFSQMIPFKPRPCAHPGAHPLAGGVFPQPPALAALCATLPPPNSFRGPFVSVELLFDIFMRLNLPDSAPQPNGDNELSPKIFDLAKSVHWIVDTSTYTGVQHSVTAVPPRRRRLLPGGDDSDDELQTAVPPSHDIYRLRQLKRFAKSN.

HAT repeat units follow at residues 46-78 (RPIHEVRSLYESLVNVFPTTARYWKLYIEMEMR), 80-111 (RYYERVEKLFQRCLVKILNIDLWKLYLTYVKE), 118-153 (THKEKMAQAYDFALEKIGMDLHSFSIWQDYIYFLRG), 164-197 (QKITAVRRVYQKAVVTPIVGIEQLWKDYIAFEQN), 230-262 (GLNRNLPAVPPTLTKEEVKQVELWKRFITYEKS), 387-420 (LKYEKVHTMYNKLLQLPDIDPTLVYVQYMKFARR), and 491-527 (NEDNNTRVLFERVLSSGGLSPHKSVEVWNRFLEFESN). 2 disordered regions span residues 595-615 (GAQSQNTGEVETDSEATPPLP) and 727-747 (RRRRLLPGGDDSDDELQTAVP). S738 is subject to Phosphoserine.

Probably interacts with an RNA-binding protein.

Its subcellular location is the nucleus. Functionally, essential protein, may play a role in mRNA production or stability. The protein is Protein suppressor of forked (su(f)) of Drosophila melanogaster (Fruit fly).